Consider the following 367-residue polypeptide: Alpha-2-HS-glycoprotein (367 aa).

Positions 1–18 (MKSLVLLLCLAQLWGCHS) are cleaved as a signal peptide. The region spanning 27–133 (YRQPNCDDPE…KFSVVYAKCD (107 aa)) is the Cystatin fetuin-A-type 1 domain. Disulfide bonds link cysteine 32–cysteine 358, cysteine 89–cysteine 100, cysteine 114–cysteine 132, cysteine 146–cysteine 149, cysteine 208–cysteine 219, and cysteine 230–cysteine 247. Phosphoserine is present on residues serine 134, serine 135, and serine 138. The 112-residue stretch at 144–255 (KVCQDCPLLA…TCTVFQTQPV (112 aa)) folds into the Cystatin fetuin-A-type 2 domain. Residues asparagine 156 and asparagine 176 are each glycosylated (N-linked (GlcNAc...) asparagine). The disordered stretch occupies residues 254 to 301 (PVTSQPQPEGANETVPTPVVDPDAPPSPPLGAPGLPPAGSPPDSHVLL). Residue asparagine 265 is glycosylated (N-linked (GlcNAc...) asparagine). Residues 276–293 (DAPPSPPLGAPGLPPAGS) are compositionally biased toward pro residues. Positions 301-340 (LAAPPGHQLHWAHYDLRHTFMGVVSLGSPSGEASHPRKTR) are cleaved as a propeptide — connecting peptide. Position 319 is a phosphothreonine (threonine 319). A phosphoserine mark is found at serine 325, serine 328, and serine 330. A glycan (O-linked (GalNAc...) threonine) is linked at threonine 339.

It belongs to the fetuin family. Alpha-2-HS glycoprotein derives from this precursor, when the connecting peptide is cleaved off. The two chains A and B are held together by a single disulfide bond. In terms of processing, phosphorylated by FAM20C in the extracellular medium.

It is found in the secreted. Its function is as follows. Promotes endocytosis, possesses opsonic properties and influences the mineral phase of bone. Shows affinity for calcium and barium ions. The sequence is that of Alpha-2-HS-glycoprotein (AHSG) from Pan troglodytes (Chimpanzee).